A 162-amino-acid chain; its full sequence is Retinoic acid receptor responder protein 2 (162 aa).

The signal sequence occupies residues 1–20 (MWQLLLPLALGLGTMGLGRA). Cystine bridges form between cysteine 77–cysteine 87, cysteine 98–cysteine 117, and cysteine 101–cysteine 135. The propeptide occupies 156–162 (FIKALSP).

Post-translationally, secreted in an inactive precursor form, prochemerin, which is proteolytically processed by a variety of extracellular proteases to generate forms with differing levels of bioactivity. For example, the removal of five amino acids results in chemerin-157, which exhibits the highest activity, while removal of six amino acids results in chemerin-156 which has slightly less activity. Some proteases are able to cleave at more than one site and chemerin forms may be sequentially processed by different enzymes to modulate activity levels. The coordinated expression and activity of chemerin-modifying enzymes is essential for regulating its bioactivation, inactivation and, consequently, biological function. Cathepsin G cleaves six C-terminal amino acids from prochemerin (chemerin-156), elastase is able to cleave five (chemerin-157), seven (chemerin-155) or ten (chemerin-152), plasmin cleaves four amino acids (chemerin-158), and tryptase cleaves four (chemerin-158) or seven (chemerin-155). Multiple cleavages might be required to fully activate chemerin, with an initial tryptase cleavage resulting in chemerin with low activity (chemerin-158), and a second cleavage by carboxypeptidase N or B producing highly active chemerin (chemerin-157).

The protein resides in the secreted. Adipocyte-secreted protein (adipokine) that regulates adipogenesis, metabolism and inflammation through activation of the chemokine-like receptor 1 (CMKLR1). Also acts as a ligand for CMKLR2. Can also bind to C-C chemokine receptor-like 2 (CCRL2), but with a lower affinity than it does to CMKLR1 or CMKLR2. Positively regulates adipocyte differentiation, modulates the expression of adipocyte genes involved in lipid and glucose metabolism and might play a role in angiogenesis, a process essential for the expansion of white adipose tissue. Also acts as a pro-inflammatory adipokine, causing an increase in secretion of pro-inflammatory and prodiabetic adipokines, which further impair adipose tissue metabolic function and have negative systemic effects including impaired insulin sensitivity, altered glucose and lipid metabolism, and a decrease in vascular function in other tissues. Can have both pro- and anti-inflammatory properties depending on the modality of enzymatic cleavage by different classes of proteases. Acts as a chemotactic factor for leukocyte populations expressing CMKLR1, particularly immature plasmacytoid dendritic cells, but also immature myeloid DCs, macrophages and natural killer cells. Exerts an anti-inflammatory role by preventing TNF/TNFA-induced VCAM1 expression and monocytes adhesion in vascular endothelial cells. The effect is mediated via inhibiting activation of NF-kappa-B and CRK/p38 through stimulation of AKT1/NOS3 signaling and nitric oxide production. Exhibits an antimicrobial function in the skin. In Bos taurus (Bovine), this protein is Retinoic acid receptor responder protein 2 (RARRES2).